The chain runs to 167 residues: Ribosome-binding factor A (167 aa).

The segment at 122 to 167 (LAASAKHAGEADPYKGDSPEDIDEDDFDEEDTDLSGDNDLDEDANR) is disordered. Positions 128–139 (HAGEADPYKGDS) are enriched in basic and acidic residues. Acidic residues predominate over residues 140–167 (PEDIDEDDFDEEDTDLSGDNDLDEDANR).

This sequence belongs to the RbfA family. In terms of assembly, monomer. Binds 30S ribosomal subunits, but not 50S ribosomal subunits or 70S ribosomes.

The protein localises to the cytoplasm. Functionally, one of several proteins that assist in the late maturation steps of the functional core of the 30S ribosomal subunit. Associates with free 30S ribosomal subunits (but not with 30S subunits that are part of 70S ribosomes or polysomes). Required for efficient processing of 16S rRNA. May interact with the 5'-terminal helix region of 16S rRNA. This chain is Ribosome-binding factor A, found in Paenarthrobacter aurescens (strain TC1).